The sequence spans 367 residues: Glutamate 5-kinase (367 aa).

K10 provides a ligand contact to ATP. Residues S50, D137, and N149 each contribute to the substrate site. ATP-binding positions include 169–170 and 211–217; these read TD and TGGMGTK. Positions 275 to 353 constitute a PUA domain; the sequence is AGEITVDEGA…QQIDAILGYE (79 aa).

It belongs to the glutamate 5-kinase family.

The protein localises to the cytoplasm. It catalyses the reaction L-glutamate + ATP = L-glutamyl 5-phosphate + ADP. It functions in the pathway amino-acid biosynthesis; L-proline biosynthesis; L-glutamate 5-semialdehyde from L-glutamate: step 1/2. Functionally, catalyzes the transfer of a phosphate group to glutamate to form L-glutamate 5-phosphate. The protein is Glutamate 5-kinase of Citrobacter koseri (strain ATCC BAA-895 / CDC 4225-83 / SGSC4696).